The chain runs to 67 residues: Alpha-toxin Bu1 (67 aa).

An LCN-type CS-alpha/beta domain is found at 3-65; it reads RDAYIADDKN…VPIRIPGRCR (63 aa). 4 cysteine pairs are disulfide-bonded: Cys-13-Cys-64, Cys-17-Cys-37, Cys-23-Cys-47, and Cys-27-Cys-49. Residue Arg-65 is modified to Arginine amide.

Belongs to the long (4 C-C) scorpion toxin superfamily. Sodium channel inhibitor family. Alpha subfamily. As to expression, expressed by the venom gland.

It localises to the secreted. Alpha toxins bind voltage-independently at site-3 of sodium channels (Nav) and inhibit the inactivation of the activated channels, thereby blocking neuronal transmission. Since the experiments have been done on F11 cells (immortalized cell line derived from rat DRG neurons mainly expressing Nav1.3/SCN3A, but also Nav1.7/SCN9A and Nav1.2/SCN2A), it is supposed to act on these channels. The slow of inactivation process is partially reversible. Is lethal to mice. The polypeptide is Alpha-toxin Bu1 (Buthacus macrocentrus (Turkish scorpion)).